The primary structure comprises 267 residues: Regulatory protein RecX (267 aa).

The protein belongs to the RecX family.

The protein resides in the cytoplasm. In terms of biological role, modulates RecA activity. The polypeptide is Regulatory protein RecX (Staphylococcus epidermidis (strain ATCC 12228 / FDA PCI 1200)).